We begin with the raw amino-acid sequence, 367 residues long: UDP-N-acetylglucosamine--N-acetylmuramyl-(pentapeptide) pyrophosphoryl-undecaprenol N-acetylglucosamine transferase (367 aa).

Residues Thr15–Gly17, Asn127, Arg163, Ser191, Ile249, and Gln294 contribute to the UDP-N-acetyl-alpha-D-glucosamine site.

The protein belongs to the glycosyltransferase 28 family. MurG subfamily.

It is found in the cell inner membrane. It carries out the reaction di-trans,octa-cis-undecaprenyl diphospho-N-acetyl-alpha-D-muramoyl-L-alanyl-D-glutamyl-meso-2,6-diaminopimeloyl-D-alanyl-D-alanine + UDP-N-acetyl-alpha-D-glucosamine = di-trans,octa-cis-undecaprenyl diphospho-[N-acetyl-alpha-D-glucosaminyl-(1-&gt;4)]-N-acetyl-alpha-D-muramoyl-L-alanyl-D-glutamyl-meso-2,6-diaminopimeloyl-D-alanyl-D-alanine + UDP + H(+). It functions in the pathway cell wall biogenesis; peptidoglycan biosynthesis. Cell wall formation. Catalyzes the transfer of a GlcNAc subunit on undecaprenyl-pyrophosphoryl-MurNAc-pentapeptide (lipid intermediate I) to form undecaprenyl-pyrophosphoryl-MurNAc-(pentapeptide)GlcNAc (lipid intermediate II). This is UDP-N-acetylglucosamine--N-acetylmuramyl-(pentapeptide) pyrophosphoryl-undecaprenol N-acetylglucosamine transferase from Burkholderia pseudomallei (strain 1106a).